We begin with the raw amino-acid sequence, 444 residues long: NAD-capped RNA hydrolase NUDT12 (444 aa).

ANK repeat units follow at residues glutamate 11 to asparagine 40 and serine 60 to leucine 80. Position 167 is an N6-succinyllysine (lysine 167). Zn(2+)-binding residues include cysteine 266 and cysteine 269. Position 274 is an N6-succinyllysine (lysine 274). Zn(2+) contacts are provided by cysteine 284 and cysteine 289. Residues tyrosine 300, alanine 336–phenylalanine 338, glutamate 352, glutamate 356, and glutamate 397 each bind substrate. A Nudix hydrolase domain is found at proline 301–lysine 435. Residues alanine 336, glutamate 352, glutamate 356, and glutamate 397 each coordinate Mg(2+). The Nudix box signature appears at glycine 337–glycine 358. The Microbody targeting signal motif lies at proline 442–leucine 444.

This sequence belongs to the Nudix hydrolase family. NudC subfamily. As to quaternary structure, homodimer. Homodimerization is essential for its catalytic activity and protein stability. Interacts (via ANK repeats) with BLMH. Requires Mg(2+) as cofactor. It depends on Zn(2+) as a cofactor.

It is found in the cytoplasm. The protein resides in the peroxisome. It localises to the cytoplasmic granule. It carries out the reaction a 5'-end NAD(+)-phospho-ribonucleoside in mRNA + H2O = a 5'-end phospho-adenosine-phospho-ribonucleoside in mRNA + beta-nicotinamide D-ribonucleotide + 2 H(+). The catalysed reaction is NAD(+) + H2O = beta-nicotinamide D-ribonucleotide + AMP + 2 H(+). The enzyme catalyses NADH + H2O = reduced beta-nicotinamide D-ribonucleotide + AMP + 2 H(+). It catalyses the reaction NADPH + H2O = reduced beta-nicotinamide D-ribonucleotide + adenosine 2',5'-bisphosphate + 2 H(+). Its function is as follows. mRNA decapping enzyme that specifically removes the nicotinamide adenine dinucleotide (NAD) cap from a subset of mRNAs by hydrolyzing the diphosphate linkage to produce nicotinamide mononucleotide (NMN) and 5' monophosphate mRNA. The NAD-cap is present at the 5'-end of some RNAs; in contrast to the canonical N7 methylguanosine (m7G) cap, the NAD cap promotes mRNA decay. Preferentially acts on NAD-capped transcripts in response to nutrient stress. Also acts on free nicotinamide adenine dinucleotide molecules: hydrolyzes NAD(H) into NMN(H) and AMP, and NADPH into NMNH and 2',5'-ADP. May act to regulate the concentration of peroxisomal nicotinamide nucleotide cofactors required for oxidative metabolism in this organelle. Regulates the levels of circadian clock components PER1, PER2, PER3 and CRY2 in the liver. The polypeptide is NAD-capped RNA hydrolase NUDT12 (Bos taurus (Bovine)).